Here is a 245-residue protein sequence, read N- to C-terminus: Probable phosphatase Teth514_1060 (245 aa).

Positions 8, 10, 16, 41, 74, 102, 133, 194, and 196 each coordinate Zn(2+).

It belongs to the PHP family. Requires Zn(2+) as cofactor.

The chain is Probable phosphatase Teth514_1060 from Thermoanaerobacter sp. (strain X514).